Here is a 530-residue protein sequence, read N- to C-terminus: Probable glycerol-3-phosphate acyltransferase 2 (530 aa).

A run of 3 helical transmembrane segments spans residues 70–90 (YFMV…LLVL), 93–113 (FISL…SFFG), and 275–295 (LVLF…LVFG). Residues 339–344 (HRTLLD) carry the HXXXXD motif motif.

The protein belongs to the GPAT/DAPAT family. In terms of tissue distribution, weakly or not expressed in roots, leaves, seedlings, developing siliques and flower buds.

Its subcellular location is the membrane. It carries out the reaction sn-glycerol 3-phosphate + an acyl-CoA = a 1-acyl-sn-glycero-3-phosphate + CoA. The protein operates within phospholipid metabolism; CDP-diacylglycerol biosynthesis; CDP-diacylglycerol from sn-glycerol 3-phosphate: step 1/3. Its function is as follows. Esterifies acyl-group from acyl-ACP to the sn-1 position of glycerol-3-phosphate, an essential step in glycerolipid biosynthesis. The sequence is that of Probable glycerol-3-phosphate acyltransferase 2 (GPAT2) from Arabidopsis thaliana (Mouse-ear cress).